Here is a 1360-residue protein sequence, read N- to C-terminus: Ubiquitin carboxyl-terminal hydrolase 19 (1360 aa).

A disordered region spans residues Met-1–Arg-46. The Cytoplasmic portion of the chain corresponds to Met-1–Tyr-1333. Basic and acidic residues predominate over residues Asp-28–Arg-46. Positions Lys-51 to Leu-140 constitute a CS 1 domain. The segment at Pro-163–Thr-239 is disordered. Basic and acidic residues predominate over residues Ser-170–Asn-181. Residues Gly-189–Thr-199 are compositionally biased toward gly residues. Ser-220 is subject to Phosphoserine. The 103-residue stretch at Leu-322–Glu-424 folds into the CS 2 domain. Residues Val-432–Asp-482 are disordered. A compositionally biased stretch (basic and acidic residues) spans Glu-462 to Asp-478. In terms of domain architecture, USP spans Thr-539–Arg-1256. The Nucleophile role is filled by Cys-548. 8 residues coordinate Zn(2+): Cys-833, Cys-836, Cys-850, Cys-853, Cys-859, Cys-863, His-871, and Cys-875. An MYND-type zinc finger spans residues Cys-833–Cys-875. The tract at residues Asp-965–Ser-988 is disordered. His-1207 acts as the Proton acceptor in catalysis. Residues Pro-1259 to Asp-1274 are compositionally biased toward basic and acidic residues. Residues Pro-1259–Ala-1281 are disordered. A helical transmembrane segment spans residues Phe-1334 to Val-1354. The Lumenal portion of the chain corresponds to Ser-1355–Arg-1360.

In terms of assembly, interacts with RNF123. Interacts with BIRC2/c-IAP1, BIRC3/c-IAP2 and XIAP/BIRC4. Interacts with HIF1A (via N-terminus).

It is found in the endoplasmic reticulum membrane. It catalyses the reaction Thiol-dependent hydrolysis of ester, thioester, amide, peptide and isopeptide bonds formed by the C-terminal Gly of ubiquitin (a 76-residue protein attached to proteins as an intracellular targeting signal).. Deubiquitinating enzyme that regulates the degradation of various proteins by removing ubiquitin moieties, thereby preventing their proteasomal degradation. Stabilizes RNF123, which promotes CDKN1B degradation and contributes to cell proliferation. Decreases the levels of ubiquitinated proteins during skeletal muscle formation and acts to repress myogenesis. Modulates transcription of major myofibrillar proteins. Also involved in turnover of endoplasmic-reticulum-associated degradation (ERAD) substrates. Mechanistically, deubiquitinates and thereby stabilizes several E3 ligases involved in the ERAD pathway including SYVN1 or MARCHF6. Regulates the stability of other E3 ligases including BIRC2/c-IAP1 and BIRC3/c-IAP2 by preventing their ubiquitination. Required for cells to mount an appropriate response to hypoxia by rescuing HIF1A from degradation in a non-catalytic manner and by mediating the deubiquitination of FUNDC1. Attenuates mitochondrial damage and ferroptosis by targeting and stabilizing NADPH oxidase 4/NOX4. Negatively regulates TNF-alpha- and IL-1beta-triggered NF-kappa-B activation by hydrolyzing 'Lys-27'- and 'Lys-63'-linked polyubiquitin chains from MAP3K7. Modulates also the protein level and aggregation of polyQ-expanded huntingtin/HTT through HSP90AA1. The chain is Ubiquitin carboxyl-terminal hydrolase 19 (Usp19) from Mus musculus (Mouse).